The primary structure comprises 333 residues: Plasminogen (333 aa).

The region spanning 4 to 83 (CMFGNGKGYR…LFDYCDVPQC (80 aa)) is the Kringle 5 domain. 9 cysteine pairs are disulfide-bonded: cysteine 4-cysteine 83, cysteine 25-cysteine 66, cysteine 54-cysteine 78, cysteine 90-cysteine 208, cysteine 100-cysteine 108, cysteine 130-cysteine 146, cysteine 222-cysteine 289, cysteine 252-cysteine 268, and cysteine 279-cysteine 307. The region spanning 104 to 331 (VVGGCVANPH…FVTWIEGIMR (228 aa)) is the Peptidase S1 domain. Residue serine 120 is modified to Phosphoserine. Active-site charge relay system residues include histidine 145 and aspartate 188. The active-site Charge relay system is serine 283.

Belongs to the peptidase S1 family. Plasminogen subfamily. As to quaternary structure, interacts with CSPG4 and AMOT. Interacts (via the Kringle domains) with HRG; the interaction tethers PLG to the cell surface and enhances its activation. Interacts (via Kringle 4 domain) with ADA; the interaction stimulates PLG activation when in complex with DPP4. Angiostatin: Interacts with ATP5F1A; the interaction inhibits most of the angiogenic effects of angiostatin.

It localises to the secreted. The enzyme catalyses Preferential cleavage: Lys-|-Xaa &gt; Arg-|-Xaa, higher selectivity than trypsin. Converts fibrin into soluble products.. With respect to regulation, converted into plasmin by plasminogen activators, both plasminogen and its activator being bound to fibrin. Activated with urokinase and high concentrations of streptokinase. Plasmin dissolves the fibrin of blood clots and acts as a proteolytic factor in a variety of other processes including embryonic development, tissue remodeling, tumor invasion, and inflammation. In ovulation, weakens the walls of the Graafian follicle. It activates the urokinase-type plasminogen activator, collagenases and several complement zymogens, such as C1, C4 and C5. Cleavage of fibronectin and laminin leads to cell detachment and apoptosis. Also cleaves fibrin, thrombospondin and von Willebrand factor. Its role in tissue remodeling and tumor invasion may be modulated by CSPG4. Binds to cells. The chain is Plasminogen (PLG) from Canis lupus familiaris (Dog).